The chain runs to 280 residues: 4-diphosphocytidyl-2-C-methyl-D-erythritol kinase (280 aa).

Lys-11 is a catalytic residue. An ATP-binding site is contributed by 95–105 (PVAAGLGGGSS). Asp-137 is a catalytic residue.

Belongs to the GHMP kinase family. IspE subfamily.

The catalysed reaction is 4-CDP-2-C-methyl-D-erythritol + ATP = 4-CDP-2-C-methyl-D-erythritol 2-phosphate + ADP + H(+). The protein operates within isoprenoid biosynthesis; isopentenyl diphosphate biosynthesis via DXP pathway; isopentenyl diphosphate from 1-deoxy-D-xylulose 5-phosphate: step 3/6. Catalyzes the phosphorylation of the position 2 hydroxy group of 4-diphosphocytidyl-2C-methyl-D-erythritol. The protein is 4-diphosphocytidyl-2-C-methyl-D-erythritol kinase of Pelobacter propionicus (strain DSM 2379 / NBRC 103807 / OttBd1).